The following is a 71-amino-acid chain: Translation initiation factor IF-1 (71 aa).

The region spanning 1–71 (MKEKNIEMQG…SKGRIIFRSR (71 aa)) is the S1-like domain.

Belongs to the IF-1 family. In terms of assembly, component of the 30S ribosomal translation pre-initiation complex which assembles on the 30S ribosome in the order IF-2 and IF-3, IF-1 and N-formylmethionyl-tRNA(fMet); mRNA recruitment can occur at any time during PIC assembly.

The protein localises to the cytoplasm. One of the essential components for the initiation of protein synthesis. Stabilizes the binding of IF-2 and IF-3 on the 30S subunit to which N-formylmethionyl-tRNA(fMet) subsequently binds. Helps modulate mRNA selection, yielding the 30S pre-initiation complex (PIC). Upon addition of the 50S ribosomal subunit IF-1, IF-2 and IF-3 are released leaving the mature 70S translation initiation complex. The protein is Translation initiation factor IF-1 of Buchnera aphidicola subsp. Cinara cedri (strain Cc).